The following is an 89-amino-acid chain: Small ribosomal subunit protein uS19 (89 aa).

The protein belongs to the universal ribosomal protein uS19 family.

Protein S19 forms a complex with S13 that binds strongly to the 16S ribosomal RNA. The protein is Small ribosomal subunit protein uS19 of Xylella fastidiosa (strain M23).